We begin with the raw amino-acid sequence, 158 residues long: MENQKQYPMTQEGYEKLEQELEELKTVKRPEVVEKIKVARSFGDLSENSEYDAAKDEQGFIEQDIQRIEHMIRNALIIEDNGDNNVVQIGKTVTFIELPGDEEESYQIVGSAEADAFKGKISNESPMAKALIGKGLNDQVRVPLPNGGEMNVKIVEIK.

Residues 2 to 70 (ENQKQYPMTQ…IEQDIQRIEH (69 aa)) adopt a coiled-coil conformation.

This sequence belongs to the GreA/GreB family.

Necessary for efficient RNA polymerase transcription elongation past template-encoded arresting sites. The arresting sites in DNA have the property of trapping a certain fraction of elongating RNA polymerases that pass through, resulting in locked ternary complexes. Cleavage of the nascent transcript by cleavage factors such as GreA or GreB allows the resumption of elongation from the new 3'terminus. GreA releases sequences of 2 to 3 nucleotides. The chain is Transcription elongation factor GreA from Staphylococcus epidermidis (strain ATCC 35984 / DSM 28319 / BCRC 17069 / CCUG 31568 / BM 3577 / RP62A).